We begin with the raw amino-acid sequence, 231 residues long: Large ribosomal subunit protein uL1 (231 aa).

The protein belongs to the universal ribosomal protein uL1 family. As to quaternary structure, part of the 50S ribosomal subunit.

Functionally, binds directly to 23S rRNA. The L1 stalk is quite mobile in the ribosome, and is involved in E site tRNA release. Protein L1 is also a translational repressor protein, it controls the translation of the L11 operon by binding to its mRNA. This Legionella pneumophila (strain Paris) protein is Large ribosomal subunit protein uL1.